Reading from the N-terminus, the 105-residue chain is Small ribosomal subunit protein uS10 (105 aa).

Belongs to the universal ribosomal protein uS10 family. In terms of assembly, part of the 30S ribosomal subunit.

Involved in the binding of tRNA to the ribosomes. The chain is Small ribosomal subunit protein uS10 from Desulfotalea psychrophila (strain LSv54 / DSM 12343).